The following is a 397-amino-acid chain: Acetate kinase (397 aa).

Mg(2+) is bound at residue Asn7. Position 14 (Lys14) interacts with ATP. Substrate is bound at residue Arg90. The active-site Proton donor/acceptor is Asp147. ATP contacts are provided by residues 207–211 (HLGNG), 282–284 (DFR), and 330–334 (GLGEN). Glu383 provides a ligand contact to Mg(2+).

The protein belongs to the acetokinase family. In terms of assembly, homodimer. The cofactor is Mg(2+). It depends on Mn(2+) as a cofactor.

It localises to the cytoplasm. It carries out the reaction acetate + ATP = acetyl phosphate + ADP. The protein operates within metabolic intermediate biosynthesis; acetyl-CoA biosynthesis; acetyl-CoA from acetate: step 1/2. In terms of biological role, catalyzes the formation of acetyl phosphate from acetate and ATP. Can also catalyze the reverse reaction. This is Acetate kinase from Clostridium botulinum (strain Langeland / NCTC 10281 / Type F).